We begin with the raw amino-acid sequence, 201 residues long: Recombination protein RecR (201 aa).

The C4-type zinc-finger motif lies at 60–75 (CSVCGNVDTTDPCSIC). A Toprim domain is found at 83–178 (TTIIVVEDVA…KITRLAHGVP (96 aa)).

It belongs to the RecR family.

May play a role in DNA repair. It seems to be involved in an RecBC-independent recombinational process of DNA repair. It may act with RecF and RecO. The polypeptide is Recombination protein RecR (Bartonella quintana (strain Toulouse) (Rochalimaea quintana)).